Here is a 518-residue protein sequence, read N- to C-terminus: Mitochondrial 2-methylisocitrate lyase (518 aa).

The protein belongs to the isocitrate lyase/PEP mutase superfamily. Isocitrate lyase family.

It is found in the mitochondrion matrix. Its subcellular location is the cytoplasm. The catalysed reaction is (2S,3R)-3-hydroxybutane-1,2,3-tricarboxylate = pyruvate + succinate. It participates in organic acid metabolism; propanoate degradation. In terms of biological role, catalyzes the formation of pyruvate and succinate from 2-methylisocitrate during the metabolism of endogenous propionyl-CoA. Does not act on isocitrate. In Schizosaccharomyces pombe (strain 972 / ATCC 24843) (Fission yeast), this protein is Mitochondrial 2-methylisocitrate lyase (icl2).